The sequence spans 536 residues: DEAD-box ATP-dependent RNA helicase 26 (536 aa).

Positions 1 to 44 (MMSGGPSDATHRKRRRRRGPKGSGVDGPSIPRAVTTNGAGPEEE) are disordered. Basic residues predominate over residues 11–20 (HRKRRRRRGP). Positions 74 to 102 (TRFDQCPVSPLSLKAIKDAGYEKMTQVQE) match the Q motif motif. The Helicase ATP-binding domain maps to 105–282 (LPIILQGEDV…HIAMKRGYKF (178 aa)). An ATP-binding site is contributed by 118 to 125 (AKTGTGKT). The DEAD box motif lies at 230–233 (DEAD). In terms of domain architecture, Helicase C-terminal spans 316 to 466 (VLKKHIAEDA…SIQTGVKDAL (151 aa)).

It belongs to the DEAD box helicase family.

It catalyses the reaction ATP + H2O = ADP + phosphate + H(+). The chain is DEAD-box ATP-dependent RNA helicase 26 from Oryza sativa subsp. japonica (Rice).